The following is a 213-amino-acid chain: Eukaryotic translation initiation factor isoform 4E (213 aa).

Positions 1–37 (MATEVAAAVPPPQLDAEENSGLEAAAAEAKIQPSSGP) are disordered. MRNA is bound by residues 56-61 (QGAAWG), lysine 88, and 106-107 (WE). The cysteines at positions 111 and 150 are disulfide-linked. MRNA contacts are provided by residues 157–162 (RQRQDK) and 202–205 (KRER).

The protein belongs to the eukaryotic initiation factor 4E family. As to quaternary structure, EIF4F is a multi-subunit complex, the composition of which varies with external and internal environmental conditions. It is composed of at least EIF4A, EIF4E and EIF4G. EIF4E is also known to interact with other partners. In higher plants two isoforms of EIF4F have been identified, named isoform EIF4F and isoform EIF(iso)4F. Isoform EIF4F has subunits p220 and p26, whereas isoform EIF(iso)4F has subunits p82 and p28. In terms of assembly, (Microbial infection) Interacts with potyvirus viral genome-linked protein (VPg) of plum pox virus (PPV) strain D both in nucleus and cytoplasm; this interaction is possible in susceptible hosts but is impaired in resistant plants. Post-translationally, according to the redox status, the Cys-111-Cys-150 disulfide bridge may have a role in regulating protein function by affecting its ability to bind capped mRNA. In terms of tissue distribution, mostly expressed in leaves, flower buds, leaf buds and anthers, to a lower extent in roots, stems and green immature fruit, and, at low levels, in petals.

Its subcellular location is the cytoplasm. It localises to the nucleus. In terms of biological role, component of the protein complex eIF4F, which is involved in the recognition of the mRNA cap, ATP-dependent unwinding of 5'-terminal secondary structure and recruitment of mRNA to the ribosome. Recognizes and binds the 7-methylguanosine-containing mRNA cap during an early step in the initiation of protein synthesis and facilitates ribosome binding by inducing the unwinding of the mRNAs secondary structures. Key component of recessive resistance to potyviruses such as the plum pox virus (PPV) strain D. (Microbial infection) Susceptibility host factor required for viral infection by recruiting viral RNAs to the host ribosomal complex via an interaction with viral genome-linked protein (VPg). This Prunus domestica (Garden plum) protein is Eukaryotic translation initiation factor isoform 4E.